We begin with the raw amino-acid sequence, 473 residues long: Photosystem II CP43 reaction center protein (473 aa).

Residues 1–14 constitute a propeptide that is removed on maturation; that stretch reads MKILYSLRRFYHVE. Position 15 is an N-acetylthreonine (T15). A Phosphothreonine modification is found at T15. Helical transmembrane passes span 69–93, 134–155, 178–200, 255–275, and 291–312; these read LFEV…PHLA, LLGP…KDRN, KALY…RKIT, KPFA…LSYS, and WFNN…ASQA. Position 367 (E367) interacts with [CaMn4O5] cluster. A helical membrane pass occupies residues 447 to 471; it reads RARAAAAGFEKGIDRDLEPVLYMTP.

It belongs to the PsbB/PsbC family. PsbC subfamily. As to quaternary structure, PSII is composed of 1 copy each of membrane proteins PsbA, PsbB, PsbC, PsbD, PsbE, PsbF, PsbH, PsbI, PsbJ, PsbK, PsbL, PsbM, PsbT, PsbX, PsbY, PsbZ, Psb30/Ycf12, at least 3 peripheral proteins of the oxygen-evolving complex and a large number of cofactors. It forms dimeric complexes. It depends on Binds multiple chlorophylls and provides some of the ligands for the Ca-4Mn-5O cluster of the oxygen-evolving complex. It may also provide a ligand for a Cl- that is required for oxygen evolution. PSII binds additional chlorophylls, carotenoids and specific lipids. as a cofactor.

The protein localises to the plastid. It localises to the chloroplast thylakoid membrane. One of the components of the core complex of photosystem II (PSII). It binds chlorophyll and helps catalyze the primary light-induced photochemical processes of PSII. PSII is a light-driven water:plastoquinone oxidoreductase, using light energy to abstract electrons from H(2)O, generating O(2) and a proton gradient subsequently used for ATP formation. The protein is Photosystem II CP43 reaction center protein of Saccharum hybrid (Sugarcane).